A 274-amino-acid polypeptide reads, in one-letter code: Diaminopimelate epimerase (274 aa).

Residues Asn11, Gln44, and Asn64 each contribute to the substrate site. Residue Cys73 is the Proton donor of the active site. Residues 74 to 75 (GN), Asn157, Asn190, and 208 to 209 (ER) each bind substrate. The active-site Proton acceptor is the Cys217. A substrate-binding site is contributed by 218 to 219 (GS).

The protein belongs to the diaminopimelate epimerase family. Homodimer.

The protein resides in the cytoplasm. It catalyses the reaction (2S,6S)-2,6-diaminopimelate = meso-2,6-diaminopimelate. It functions in the pathway amino-acid biosynthesis; L-lysine biosynthesis via DAP pathway; DL-2,6-diaminopimelate from LL-2,6-diaminopimelate: step 1/1. Catalyzes the stereoinversion of LL-2,6-diaminopimelate (L,L-DAP) to meso-diaminopimelate (meso-DAP), a precursor of L-lysine and an essential component of the bacterial peptidoglycan. In Cronobacter sakazakii (strain ATCC BAA-894) (Enterobacter sakazakii), this protein is Diaminopimelate epimerase.